The chain runs to 438 residues: Aspartic proteinase nepenthesin-2 (438 aa).

The first 24 residues, 1–24 (MASPLYSVVLGLAIVSAIVAPTSS), serve as a signal peptide directing secretion. The propeptide at 25–79 (TSRGTLLHHGQKRPQPGLRVDLEQVDSGKNLTKYELIKRAIKRGERRMRSINAML) is activation peptide. N-linked (GlcNAc...) asparagine glycosylation is present at Asn-54. In terms of domain architecture, Peptidase A1 spans 96–431 (YLMNVAIGTP…DLQNLAVSFV (336 aa)). Residue Asp-114 is part of the active site. 6 disulfides stabilise this stretch: Cys-124-Cys-127, Cys-130-Cys-204, Cys-151-Cys-169, Cys-156-Cys-164, Cys-241-Cys-435, and Cys-354-Cys-395. Residue Asp-315 is part of the active site.

The protein belongs to the peptidase A1 family.

It localises to the secreted. It catalyses the reaction Similar to pepsin, but also cleaves on either side of Asp and at Lys-|-Arg.. Inhibited by pepstatin and by diazoacetyl-D,L-norleucine methyl ester (DAN) in the presence of Cu(2+) ions. In terms of biological role, extracellular proteinase found in the pitcher fluid of carnivorous plants. Digest prey for nitrogen uptake. In Nepenthes gracilis (Slender pitcher plant), this protein is Aspartic proteinase nepenthesin-2 (nep2).